The sequence spans 96 residues: MTQIMYNYPAMLDHAGNMSACAGALQGVGIDIAAEQAALQACWGGDTGISYQAWQVQWNQATEEMVRAYHAMANTHQNNTLAMLTRDQAEAAKWGG.

It belongs to the WXG100 family. ESAT-6 subfamily.

The protein localises to the secreted. The polypeptide is ESAT-6-like protein EsxR (Mycobacterium leprae (strain TN)).